The chain runs to 29 residues: MDIVGIAWAALMVVFTFSLSLVVWGRSGL.

The helical transmembrane segment at 3–23 (IVGIAWAALMVVFTFSLSLVV) threads the bilayer.

Belongs to the PetN family. In terms of assembly, the 4 large subunits of the cytochrome b6-f complex are cytochrome b6, subunit IV (17 kDa polypeptide, PetD), cytochrome f and the Rieske protein, while the 4 small subunits are PetG, PetL, PetM and PetN. The complex functions as a dimer.

Its subcellular location is the plastid. It localises to the chloroplast thylakoid membrane. In terms of biological role, component of the cytochrome b6-f complex, which mediates electron transfer between photosystem II (PSII) and photosystem I (PSI), cyclic electron flow around PSI, and state transitions. The polypeptide is Cytochrome b6-f complex subunit 8 (Cryptomeria japonica (Japanese cedar)).